The following is a 59-amino-acid chain: Potassium channel toxin alpha-KTx 16.4 (59 aa).

The signal sequence occupies residues 1–22 (MKILSIVLIALIICSISICTEA). Disulfide bonds link cysteine 30–cysteine 51, cysteine 36–cysteine 56, and cysteine 40–cysteine 58.

It belongs to the short scorpion toxin superfamily. Potassium channel inhibitor family. Alpha-KTx 16 subfamily. Expressed by the venom gland.

The protein resides in the secreted. Its function is as follows. Weak inhibitor of voltage-gated potassium channel hKv1.3/KCNA3. The protein is Potassium channel toxin alpha-KTx 16.4 of Mesobuthus eupeus (Lesser Asian scorpion).